Consider the following 73-residue polypeptide: Plasticin-A1 (73 aa).

An N-terminal signal peptide occupies residues 1 to 22 (MAFLKKSLFLVLFLAIVPLSIC). A propeptide spanning residues 23–42 (EEEKREEENEEKQEDDDQSE) is cleaved from the precursor. Residues 25–45 (EKREEENEEKQEDDDQSEKRG) form a disordered region. A compositionally biased stretch (acidic residues) spans 30 to 40 (ENEEKQEDDDQ). At G70 the chain carries Glycine amide. Residues 72–73 (ES) constitute a propeptide that is removed on maturation.

Belongs to the frog skin active peptide (FSAP) family. Plasticin subfamily. Expressed by the skin glands.

It localises to the secreted. It is found in the target cell membrane. In terms of biological role, peptide with no antimicrobial activity. May act in synergy with cationic peptides by enhancing their activity. Has a moderate hemolytic activity. This Agalychnis annae (Blue-sided leaf frog) protein is Plasticin-A1.